The chain runs to 385 residues: D-alanyl-D-alanine-carboxypeptidase/endopeptidase AmpH (385 aa).

The first 21 residues, Met1 to Ala21, serve as a signal peptide directing secretion.

The protein belongs to the beta-lactamase family.

Its subcellular location is the cell inner membrane. With respect to regulation, inhibited by cefmetazole. In terms of biological role, hydrolyzes the cross-linked dimers tetrapentapeptide (D45) and tetratetrapeptide (D44). Removes the terminal D-alanine from muropeptides and disaccharide pentapeptide M5 with a C-terminal D-Ala-D-Ala dipeptide. Associated with recycling and remodeling of peptidoglycan (PG). This is D-alanyl-D-alanine-carboxypeptidase/endopeptidase AmpH (ampH) from Escherichia coli O157:H7.